The sequence spans 116 residues: Nitrogenase-stabilizing/protective protein NifW (116 aa).

Belongs to the NifW family. In terms of assembly, homotrimer; associates with NifD.

Functionally, may protect the nitrogenase Fe-Mo protein from oxidative damage. The chain is Nitrogenase-stabilizing/protective protein NifW from Rhodopseudomonas palustris (strain ATCC BAA-98 / CGA009).